The chain runs to 291 residues: Phosphatidylglycerol--prolipoprotein diacylglyceryl transferase (291 aa).

The next 4 membrane-spanning stretches (helical) occupy residues 24–44 (WYAL…RALL), 64–84 (FILW…VLFY), 99–119 (IWKG…AVIL), and 125–145 (GLPI…GLFL). Arg147 lines the a 1,2-diacyl-sn-glycero-3-phospho-(1'-sn-glycerol) pocket. The next 3 membrane-spanning stretches (helical) occupy residues 187–207 (ATLE…AGAL), 211–231 (GLVL…GEFF), and 247–267 (MGML…CVAW).

The protein belongs to the Lgt family.

It is found in the cell inner membrane. The enzyme catalyses L-cysteinyl-[prolipoprotein] + a 1,2-diacyl-sn-glycero-3-phospho-(1'-sn-glycerol) = an S-1,2-diacyl-sn-glyceryl-L-cysteinyl-[prolipoprotein] + sn-glycerol 1-phosphate + H(+). The protein operates within protein modification; lipoprotein biosynthesis (diacylglyceryl transfer). Functionally, catalyzes the transfer of the diacylglyceryl group from phosphatidylglycerol to the sulfhydryl group of the N-terminal cysteine of a prolipoprotein, the first step in the formation of mature lipoproteins. This is Phosphatidylglycerol--prolipoprotein diacylglyceryl transferase from Nitrobacter hamburgensis (strain DSM 10229 / NCIMB 13809 / X14).